The primary structure comprises 274 residues: MTEPAIITNASDPAVQRIIDVTKHSRASIKTTLIEDTEPLMECIRAGVQFIEVYGSSGTPLDPALLDLCRQREIPVRLIDVSIVNQLFKAERKAKVFGIARVPRPARLADIAERGGDVVVLDGVKIVGNIGAIVRTSLALGAAGIVLVDSDLATIADRRLLRASRGYVFSLPVVLADREEAVSFLRDNDIALMVLDTDGDLGVKDLGDRADRMALVFGSEKGGPSGLFQEASAGTVSIPMLSSTESLNVSVSVGIALHERSARNFAVRRAAAQA.

S-adenosyl-L-methionine contacts are provided by residues Arg-165, Leu-195, 218–220 (GSE), 238–240 (IPM), and 247–252 (LNVSVS).

This sequence belongs to the class IV-like SAM-binding methyltransferase superfamily. RNA methyltransferase TsnR/AvirB family. Homodimer.

The enzyme catalyses adenosine(1067) in 23S rRNA + S-adenosyl-L-methionine = 2'-O-methyladenosine(1067) in 23S rRNA + S-adenosyl-L-homocysteine + H(+). Its function is as follows. Specifically methylates the adenosine-1067 in 23S ribosomal RNA. Confers resistance to antibiotic nosiheptide. The protein is 23S rRNA (adenosine(1067)-2'-O)-methyltransferase of Streptomyces actuosus.